A 536-amino-acid polypeptide reads, in one-letter code: CTP synthase (536 aa).

Residues 1–266 (MKTKFIFVTG…DEQVVEKLNI (266 aa)) form an amidoligase domain region. Serine 14 lines the CTP pocket. Serine 14 serves as a coordination point for UTP. ATP is bound by residues 15–20 (SIGKGL) and aspartate 72. 2 residues coordinate Mg(2+): aspartate 72 and glutamate 140. CTP is bound by residues 147–149 (DIE), 187–192 (KTKPTQ), and lysine 223. UTP is bound by residues 187–192 (KTKPTQ) and lysine 223. One can recognise a Glutamine amidotransferase type-1 domain in the interval 292 to 534 (RIAIVGKYVN…IAAALDRKDK (243 aa)). L-glutamine is bound at residue glycine 354. The active-site Nucleophile; for glutamine hydrolysis is cysteine 381. Residues 382–385 (LGMQ), glutamate 405, and arginine 462 contribute to the L-glutamine site. Residues histidine 507 and glutamate 509 contribute to the active site.

It belongs to the CTP synthase family. As to quaternary structure, homotetramer.

It carries out the reaction UTP + L-glutamine + ATP + H2O = CTP + L-glutamate + ADP + phosphate + 2 H(+). The catalysed reaction is L-glutamine + H2O = L-glutamate + NH4(+). The enzyme catalyses UTP + NH4(+) + ATP = CTP + ADP + phosphate + 2 H(+). It participates in pyrimidine metabolism; CTP biosynthesis via de novo pathway; CTP from UDP: step 2/2. Its activity is regulated as follows. Allosterically activated by GTP, when glutamine is the substrate; GTP has no effect on the reaction when ammonia is the substrate. The allosteric effector GTP functions by stabilizing the protein conformation that binds the tetrahedral intermediate(s) formed during glutamine hydrolysis. Inhibited by the product CTP, via allosteric rather than competitive inhibition. In terms of biological role, catalyzes the ATP-dependent amination of UTP to CTP with either L-glutamine or ammonia as the source of nitrogen. Regulates intracellular CTP levels through interactions with the four ribonucleotide triphosphates. The chain is CTP synthase from Geobacter sulfurreducens (strain ATCC 51573 / DSM 12127 / PCA).